Here is a 371-residue protein sequence, read N- to C-terminus: Queuine tRNA-ribosyltransferase (371 aa).

Catalysis depends on D92, which acts as the Proton acceptor. Residues 92–96, D147, Q190, and G217 each bind substrate; that span reads DSGGF. The tract at residues 248-254 is RNA binding; it reads GVGKPID. The active-site Nucleophile is the D267. The RNA binding; important for wobble base 34 recognition stretch occupies residues 272–276; it reads TRSGR.

Belongs to the queuine tRNA-ribosyltransferase family. In terms of assembly, homodimer. Within each dimer, one monomer is responsible for RNA recognition and catalysis, while the other monomer binds to the replacement base PreQ1.

It carries out the reaction 7-aminomethyl-7-carbaguanine + guanosine(34) in tRNA = 7-aminomethyl-7-carbaguanosine(34) in tRNA + guanine. The protein operates within tRNA modification; tRNA-queuosine biosynthesis. Catalyzes the base-exchange of a guanine (G) residue with the queuine precursor 7-aminomethyl-7-deazaguanine (PreQ1) at position 34 (anticodon wobble position) in tRNAs with GU(N) anticodons (tRNA-Asp, -Asn, -His and -Tyr). Catalysis occurs through a double-displacement mechanism. The nucleophile active site attacks the C1' of nucleotide 34 to detach the guanine base from the RNA, forming a covalent enzyme-RNA intermediate. The proton acceptor active site deprotonates the incoming PreQ1, allowing a nucleophilic attack on the C1' of the ribose to form the product. After dissociation, two additional enzymatic reactions on the tRNA convert PreQ1 to queuine (Q), resulting in the hypermodified nucleoside queuosine (7-(((4,5-cis-dihydroxy-2-cyclopenten-1-yl)amino)methyl)-7-deazaguanosine). The polypeptide is Queuine tRNA-ribosyltransferase (Caulobacter vibrioides (strain ATCC 19089 / CIP 103742 / CB 15) (Caulobacter crescentus)).